The primary structure comprises 497 residues: Glucose-6-phosphate 1-dehydrogenase (497 aa).

NADP(+)-binding positions include 15-22, Arg49, and Lys153; that span reads GASGDLSK. D-glucose 6-phosphate contacts are provided by residues Lys153, 183–187, Glu221, and Asp240; that span reads HYLGK. The Proton acceptor role is filled by His245. Residue Arg336 coordinates NADP(+). Lys339 is a binding site for D-glucose 6-phosphate. 3 residues coordinate NADP(+): Lys345, Arg349, and Arg371. Residue Gln373 coordinates D-glucose 6-phosphate. NADP(+)-binding positions include 379–381, 399–401, and Arg466; these read YLK and DLT.

This sequence belongs to the glucose-6-phosphate dehydrogenase family.

The enzyme catalyses D-glucose 6-phosphate + NADP(+) = 6-phospho-D-glucono-1,5-lactone + NADPH + H(+). The protein operates within carbohydrate degradation; pentose phosphate pathway; D-ribulose 5-phosphate from D-glucose 6-phosphate (oxidative stage): step 1/3. Catalyzes the rate-limiting step of the oxidative pentose-phosphate pathway, which represents a route for the dissimilation of carbohydrates besides glycolysis. The main function of this enzyme is to provide reducing power (NADPH) and pentose phosphates for fatty acid and nucleic acid synthesis. The protein is Glucose-6-phosphate 1-dehydrogenase (ZWF) of Kluyveromyces lactis (strain ATCC 8585 / CBS 2359 / DSM 70799 / NBRC 1267 / NRRL Y-1140 / WM37) (Yeast).